The sequence spans 326 residues: Lipoyl synthase (326 aa).

Positions 68, 73, 79, 94, 98, 101, and 308 each coordinate [4Fe-4S] cluster. Positions 80 to 297 constitute a Radical SAM core domain; that stretch reads FNHGTATFMI…KDVAMGLGFS (218 aa).

It belongs to the radical SAM superfamily. Lipoyl synthase family. Requires [4Fe-4S] cluster as cofactor.

It localises to the cytoplasm. It catalyses the reaction [[Fe-S] cluster scaffold protein carrying a second [4Fe-4S](2+) cluster] + N(6)-octanoyl-L-lysyl-[protein] + 2 oxidized [2Fe-2S]-[ferredoxin] + 2 S-adenosyl-L-methionine + 4 H(+) = [[Fe-S] cluster scaffold protein] + N(6)-[(R)-dihydrolipoyl]-L-lysyl-[protein] + 4 Fe(3+) + 2 hydrogen sulfide + 2 5'-deoxyadenosine + 2 L-methionine + 2 reduced [2Fe-2S]-[ferredoxin]. It participates in protein modification; protein lipoylation via endogenous pathway; protein N(6)-(lipoyl)lysine from octanoyl-[acyl-carrier-protein]: step 2/2. Its function is as follows. Catalyzes the radical-mediated insertion of two sulfur atoms into the C-6 and C-8 positions of the octanoyl moiety bound to the lipoyl domains of lipoate-dependent enzymes, thereby converting the octanoylated domains into lipoylated derivatives. This chain is Lipoyl synthase, found in Aeromonas salmonicida (strain A449).